The chain runs to 543 residues: Chaperonin GroEL 1 (543 aa).

ATP contacts are provided by residues 30-33 (TLGP), Lys-51, 87-91 (DGTTT), Gly-415, and Asp-496.

This sequence belongs to the chaperonin (HSP60) family. As to quaternary structure, forms a cylinder of 14 subunits composed of two heptameric rings stacked back-to-back. Interacts with the co-chaperonin GroES.

It localises to the cytoplasm. The enzyme catalyses ATP + H2O + a folded polypeptide = ADP + phosphate + an unfolded polypeptide.. Together with its co-chaperonin GroES, plays an essential role in assisting protein folding. The GroEL-GroES system forms a nano-cage that allows encapsulation of the non-native substrate proteins and provides a physical environment optimized to promote and accelerate protein folding. The polypeptide is Chaperonin GroEL 1 (Mesorhizobium japonicum (strain LMG 29417 / CECT 9101 / MAFF 303099) (Mesorhizobium loti (strain MAFF 303099))).